The primary structure comprises 598 residues: Glutamine--fructose-6-phosphate aminotransferase [isomerizing] (598 aa).

Cys-2 serves as the catalytic Nucleophile; for GATase activity. A Glutamine amidotransferase type-2 domain is found at 2–219; that stretch reads CGIIGYIGPR…DGEYGIVSKD (218 aa). SIS domains are found at residues 280-420 and 449-588; these read VAEL…LVGI and IAVK…PDRP. Lys-593 (for Fru-6P isomerization activity) is an active-site residue.

As to quaternary structure, homodimer.

The protein localises to the cytoplasm. It catalyses the reaction D-fructose 6-phosphate + L-glutamine = D-glucosamine 6-phosphate + L-glutamate. In terms of biological role, catalyzes the first step in hexosamine metabolism, converting fructose-6P into glucosamine-6P using glutamine as a nitrogen source. This Pyrococcus horikoshii (strain ATCC 700860 / DSM 12428 / JCM 9974 / NBRC 100139 / OT-3) protein is Glutamine--fructose-6-phosphate aminotransferase [isomerizing].